We begin with the raw amino-acid sequence, 473 residues long: Dihydrolipoyl dehydrogenase (473 aa).

Residues 36-45, Lys54, and Ala117 each bind FAD; that span reads ERYDKLGGVC. An intrachain disulfide couples Cys45 to Cys50. Residues 182-186, Asp205, and 270-273 contribute to the NAD(+) site; these read GSGII and AIGR. Residues Asp313 and Ala321 each coordinate FAD. His445 (proton acceptor) is an active-site residue.

Belongs to the class-I pyridine nucleotide-disulfide oxidoreductase family. As to quaternary structure, homodimer. It depends on FAD as a cofactor.

The protein localises to the cytoplasm. It catalyses the reaction N(6)-[(R)-dihydrolipoyl]-L-lysyl-[protein] + NAD(+) = N(6)-[(R)-lipoyl]-L-lysyl-[protein] + NADH + H(+). Its function is as follows. Lipoamide dehydrogenase is a component of the alpha-ketoacid dehydrogenase complexes. This is Dihydrolipoyl dehydrogenase (lpdA) from Buchnera aphidicola subsp. Acyrthosiphon pisum (strain APS) (Acyrthosiphon pisum symbiotic bacterium).